We begin with the raw amino-acid sequence, 388 residues long: Chorismate synthase (388 aa).

2 residues coordinate NADP(+): R39 and R45. Residues 130–132 (RSS), 251–252 (NA), G296, 311–315 (KPIPT), and R337 contribute to the FMN site.

This sequence belongs to the chorismate synthase family. Homotetramer. FMNH2 serves as cofactor.

The enzyme catalyses 5-O-(1-carboxyvinyl)-3-phosphoshikimate = chorismate + phosphate. Its pathway is metabolic intermediate biosynthesis; chorismate biosynthesis; chorismate from D-erythrose 4-phosphate and phosphoenolpyruvate: step 7/7. Catalyzes the anti-1,4-elimination of the C-3 phosphate and the C-6 proR hydrogen from 5-enolpyruvylshikimate-3-phosphate (EPSP) to yield chorismate, which is the branch point compound that serves as the starting substrate for the three terminal pathways of aromatic amino acid biosynthesis. This reaction introduces a second double bond into the aromatic ring system. The polypeptide is Chorismate synthase (Streptococcus pyogenes serotype M3 (strain SSI-1)).